Reading from the N-terminus, the 315-residue chain is piRNA biogenesis protein EXD1 (315 aa).

The 3'-5' exonuclease domain maps to 141–228; that stretch reads IYIFDIQVMQ…ECLTNYLGLQ (88 aa).

The protein belongs to the EXD1 family. In terms of assembly, homodimer. Component of the PET complex, at least composed of EXD1, SIWI, TDRD12 and piRNAs.

It is found in the cytoplasm. RNA-binding component of the PET complex, a multiprotein complex required for the processing of piRNAs during spermatogenesis. The piRNA metabolic process mediates the repression of transposable elements during meiosis by forming complexes composed of piRNAs and Piwi proteins and governs the methylation and subsequent repression of transposable elements, preventing their mobilization, which is essential for the germline integrity. The PET complex is required during the secondary piRNAs metabolic process for the PIWIL2 slicing-triggered loading of PIWIL4 piRNAs. In the PET complex, EXD1 probably acts as an RNA adapter. EXD1 is an inactive exonuclease. The protein is piRNA biogenesis protein EXD1 of Bombyx mori (Silk moth).